The following is a 3102-amino-acid chain: Laminin subunit alpha lam-3 (3102 aa).

An N-terminal signal peptide occupies residues 1 to 16 (MRLWLGLLAVSNIALG). N-linked (GlcNAc...) asparagine glycosylation is found at Asn19, Asn135, and Asn237. The region spanning 44-295 (SERGLFPNIF…SISDISIGGQ (252 aa)) is the Laminin N-terminal domain. Cystine bridges form between Cys296–Cys305, Cys298–Cys316, Cys318–Cys327, Cys330–Cys350, Cys353–Cys362, Cys355–Cys387, Cys390–Cys399, Cys402–Cys420, Cys423–Cys435, Cys425–Cys451, Cys453–Cys462, Cys465–Cys475, Cys478–Cys491, Cys480–Cys496, Cys498–Cys507, and Cys510–Cys525. 4 Laminin EGF-like domains span residues 296-352 (CICY…VCQQ), 353-422 (CQCF…ACRT), 423-477 (CECD…TCEP), and 478-527 (CPCN…GCQP). The Laminin IV type A 1 domain maps to 548–740 (INNIGWHLTD…QDTLMGGVEV (193 aa)). 31 cysteine pairs are disulfide-bonded: Cys774-Cys783, Cys776-Cys790, Cys793-Cys802, Cys805-Cys822, Cys825-Cys838, Cys827-Cys858, Cys861-Cys870, Cys873-Cys886, Cys889-Cys903, Cys891-Cys910, Cys913-Cys922, Cys925-Cys938, Cys941-Cys953, Cys943-Cys960, Cys962-Cys971, Cys974-Cys985, Cys988-Cys1000, Cys990-Cys1007, Cys1009-Cys1018, Cys1021-Cys1033, Cys1036-Cys1049, Cys1038-Cys1056, Cys1058-Cys1067, Cys1070-Cys1083, Cys1086-Cys1098, Cys1088-Cys1105, Cys1107-Cys1116, Cys1119-Cys1131, Cys1134-Cys1144, Cys1137-Cys1151, and Cys1153-Cys1162. 10 consecutive Laminin EGF-like domains span residues 774–824 (CDCH…ACEQ), 825–888 (CECP…KCIE), 889–940 (CTCN…TCKP), 941–987 (CGCH…GCPA), 988–1035 (CDCN…GCQF), 1036–1085 (CHCN…GCED), 1086–1133 (CGCD…GCTE), 1134–1180 (CEPC…GCKL), 1181–1226 (CDCS…TCEP), and 1227–1283 (CGCN…GCTE). The N-linked (GlcNAc...) asparagine glycan is linked to Asn796. An N-linked (GlcNAc...) asparagine glycan is attached at Asn991. N-linked (GlcNAc...) asparagine glycosylation is present at Asn1027. Asn1076 is a glycosylation site (N-linked (GlcNAc...) asparagine). Residue Asn1164 is glycosylated (N-linked (GlcNAc...) asparagine). Intrachain disulfides connect Cys1165–Cys1178, Cys1181–Cys1193, Cys1183–Cys1200, Cys1202–Cys1211, Cys1214–Cys1224, Cys1227–Cys1246, Cys1229–Cys1252, Cys1254–Cys1263, and Cys1266–Cys1281. Asn1288 carries an N-linked (GlcNAc...) asparagine glycan. Residues 1295-1496 (QSDLVWQQMY…STTKAIGVEK (202 aa)) form the Laminin IV type A 2 domain. 12 disulfides stabilise this stretch: Cys1540/Cys1549, Cys1542/Cys1556, Cys1559/Cys1568, Cys1571/Cys1587, Cys1590/Cys1603, Cys1592/Cys1614, Cys1617/Cys1626, Cys1629/Cys1644, Cys1647/Cys1659, Cys1649/Cys1666, Cys1668/Cys1677, and Cys1680/Cys1691. 3 consecutive Laminin EGF-like domains span residues 1540–1589 (CSCH…ACTK), 1590–1646 (CACP…TCSP), and 1647–1693 (CDCH…VCTS). 9 N-linked (GlcNAc...) asparagine glycosylation sites follow: Asn1717, Asn1734, Asn1777, Asn1806, Asn1839, Asn1875, Asn1969, Asn1984, and Asn2048. A disordered region spans residues 2061-2084 (EAVSKMLGSEGSESGDANEESLRS). N-linked (GlcNAc...) asparagine glycosylation is found at Asn2091, Asn2193, Asn2369, and Asn2479. Laminin G-like domains are found at residues 2467–2644 (SQRG…TDGC), 2652–2839 (DKII…IGMC), and 2913–3088 (RYGL…AKAC). The cysteines at positions 2617 and 2644 are disulfide-linked. 2 N-linked (GlcNAc...) asparagine glycosylation sites follow: Asn2672 and Asn2686. The cysteines at positions 2814 and 2839 are disulfide-linked. N-linked (GlcNAc...) asparagine glycans are attached at residues Asn2932, Asn2959, and Asn3007. Cys3058 and Cys3088 are oxidised to a cystine.

Laminin is a complex glycoprotein, consisting of three different polypeptide chains (alpha, beta, gamma), which are bound to each other by disulfide bonds into a cross-shaped molecule comprising one long and three short arms with globules at each end.

It is found in the secreted. The protein localises to the extracellular space. It localises to the extracellular matrix. The protein resides in the basement membrane. Its function is as follows. Binding to cells via a high affinity receptor, laminin is thought to mediate the attachment, migration and organization of cells into tissues during embryonic development by interacting with other extracellular matrix components. Required to assemble a stable basement membrane and for organizing receptor complexes and cytoskeletal components to the proper cell surfaces. During embryogenesis, does not require the presence of collagen type IV in order to associate with cell surfaces, prior to assembly of the prototypical basement membrane. Plays an important role in muscle contraction of the body. Probably plays a distinct role from the related laminin subunit alpha epi-1. The sequence is that of Laminin subunit alpha lam-3 from Caenorhabditis elegans.